Consider the following 415-residue polypeptide: Histidine--tRNA ligase (415 aa).

This sequence belongs to the class-II aminoacyl-tRNA synthetase family. Homodimer.

It localises to the cytoplasm. The enzyme catalyses tRNA(His) + L-histidine + ATP = L-histidyl-tRNA(His) + AMP + diphosphate + H(+). In Clostridium perfringens (strain ATCC 13124 / DSM 756 / JCM 1290 / NCIMB 6125 / NCTC 8237 / Type A), this protein is Histidine--tRNA ligase.